A 299-amino-acid chain; its full sequence is MASSSDHTAKIIDGKAIAHTIRSEIAEEVRGLSEKHGKVPGLAVVIVGSRKDSQTYVNTKRKACAEVGIKSFDVGLPEEVSEADLISKVHELNSNPDVHGILVQLPLPKHINEEHILGAISIDKDVDGFHPLNIGKLAMKGREPLFLPCTPKGCLELLARSGVKIKGQRAVVVGRSNIVGLPVSLLLLKADATVTTVHSHTKDPEAIIREADIVIAACGQAHMIKGNWIKPGAAVIDVGTNAVSDPSKKSGYRLVGDVDFAEASKVAGFITPVPGGVGPMTVAMLLRNTVDGAKRVFGE.

This sequence belongs to the tetrahydrofolate dehydrogenase/cyclohydrolase family. As to quaternary structure, homodimer.

It catalyses the reaction (6R)-5,10-methylene-5,6,7,8-tetrahydrofolate + NADP(+) = (6R)-5,10-methenyltetrahydrofolate + NADPH. It carries out the reaction (6R)-5,10-methenyltetrahydrofolate + H2O = (6R)-10-formyltetrahydrofolate + H(+). The protein operates within one-carbon metabolism; tetrahydrofolate interconversion. In terms of biological role, catalyzes the oxidation of 5,10-methylenetetrahydrofolate to 5,10-methenyltetrahydrofolate and then the hydrolysis of 5,10-methenyltetrahydrofolate to 10-formyltetrahydrofolate. The protein is Bifunctional protein FolD 2 (FOLD2) of Arabidopsis thaliana (Mouse-ear cress).